Reading from the N-terminus, the 251-residue chain is Probable transcriptional regulatory protein DET0444 (251 aa).

Belongs to the TACO1 family.

The protein localises to the cytoplasm. In Dehalococcoides mccartyi (strain ATCC BAA-2266 / KCTC 15142 / 195) (Dehalococcoides ethenogenes (strain 195)), this protein is Probable transcriptional regulatory protein DET0444.